Reading from the N-terminus, the 65-residue chain is MEPACRKDKQKQQTPTRGDRTKQKTAQQELKQRQRAEIYALNKVMTELEQQQFEAFCKQMQSQSE.

The span at 1-22 (MEPACRKDKQKQQTPTRGDRTK) shows a compositional bias: basic and acidic residues. Positions 1–30 (MEPACRKDKQKQQTPTRGDRTKQKTAQQEL) are disordered. Residues 31–51 (KQRQRAEIYALNKVMTELEQQ) adopt a coiled-coil conformation.

Belongs to the SVBP family.

It localises to the cytoplasm. The protein localises to the secreted. Its subcellular location is the cytoskeleton. Its function is as follows. Enhances the tyrosine carboxypeptidase activity of vash1 and vash2, thereby promoting the removal of the C-terminal tyrosine residue of alpha-tubulin. Also required to enhance the solubility and secretion of vash1 and vash2. May play a role in axon and excitatory synapse formation. This chain is Small vasohibin-binding protein, found in Danio rerio (Zebrafish).